Reading from the N-terminus, the 144-residue chain is Histone H2B.2, sperm (144 aa).

A disordered region spans residues 1–51; the sequence is MPRSPAKTSPRKGSPRKGSPSRKASPKRGGKGAKRAGKGGRRRRVVKRRRR. 5 short sequence motifs (SPKK motif) span residues 4–7, 9–12, 14–17, 19–22, and 25–28; these read SPAK, SPRK, SPSR, and SPKR. Phosphoserine is present on residues Ser-14, Ser-19, and Ser-25. Positions 24 to 51 are enriched in basic residues; that stretch reads ASPKRGGKGAKRAGKGGRRRRVVKRRRR. Ser-131 carries O-linked (GlcNAc) serine glycosylation. Residue Lys-139 forms a Glycyl lysine isopeptide (Lys-Gly) (interchain with G-Cter in ubiquitin) linkage.

Belongs to the histone H2B family. The nucleosome is a histone octamer containing two molecules each of H2A, H2B, H3 and H4 assembled in one H3-H4 heterotetramer and two H2A-H2B heterodimers. The octamer wraps approximately 147 bp of DNA. In terms of processing, monoubiquitination of Lys-139 gives a specific tag for epigenetic transcriptional activation and is also prerequisite for histone H3 'Lys-4' and 'Lys-79' methylation. Post-translationally, phosphorylated on SPKK motifs 3, 4 and 5; which may regulate DNA binding. Dephosphorylated during maturation of spermatids to mature sperm and rephosphorylated at fertilization.

The protein localises to the nucleus. It localises to the chromosome. Core component of nucleosome. Nucleosomes wrap and compact DNA into chromatin, limiting DNA accessibility to the cellular machineries which require DNA as a template. Histones thereby play a central role in transcription regulation, DNA repair, DNA replication and chromosomal stability. DNA accessibility is regulated via a complex set of post-translational modifications of histones, also called histone code, and nucleosome remodeling. The sequence is that of Histone H2B.2, sperm from Parechinus angulosus (Angulate sea urchin).